The sequence spans 389 residues: GTPase Obg (389 aa).

The region spanning 1 to 159 is the Obg domain; the sequence is MKFVDEAVIR…RSLKLELLLL (159 aa). Residues 160–333 enclose the OBG-type G domain; it reads ADVGLLGMPN…LALKLLDYIA (174 aa). GTP-binding positions include 166–173, 191–195, 213–216, 283–286, and 314–316; these read GMPNAGKS, FTTLV, DIPG, NKTD, and SAY. Mg(2+)-binding residues include S173 and T193.

Belongs to the TRAFAC class OBG-HflX-like GTPase superfamily. OBG GTPase family. In terms of assembly, monomer. The cofactor is Mg(2+).

Its subcellular location is the cytoplasm. In terms of biological role, an essential GTPase which binds GTP, GDP and possibly (p)ppGpp with moderate affinity, with high nucleotide exchange rates and a fairly low GTP hydrolysis rate. Plays a role in control of the cell cycle, stress response, ribosome biogenesis and in those bacteria that undergo differentiation, in morphogenesis control. The protein is GTPase Obg of Shewanella baltica (strain OS223).